The sequence spans 201 residues: Recombination protein RecR (201 aa).

A C4-type zinc finger spans residues 59–74; that stretch reads CEICGNMDTENICRIC. The Toprim domain maps to 82–177; the sequence is SIIAIVETVA…KISRLASGIP (96 aa).

The protein belongs to the RecR family.

May play a role in DNA repair. It seems to be involved in an RecBC-independent recombinational process of DNA repair. It may act with RecF and RecO. The protein is Recombination protein RecR of Rickettsia peacockii (strain Rustic).